The chain runs to 378 residues: UDP-N-acetylglucosamine--N-acetylmuramyl-(pentapeptide) pyrophosphoryl-undecaprenol N-acetylglucosamine transferase (378 aa).

Residues 14-16 (TGG), N125, R165, S193, and Q293 each bind UDP-N-acetyl-alpha-D-glucosamine.

The protein belongs to the glycosyltransferase 28 family. MurG subfamily.

The protein localises to the cell inner membrane. It carries out the reaction di-trans,octa-cis-undecaprenyl diphospho-N-acetyl-alpha-D-muramoyl-L-alanyl-D-glutamyl-meso-2,6-diaminopimeloyl-D-alanyl-D-alanine + UDP-N-acetyl-alpha-D-glucosamine = di-trans,octa-cis-undecaprenyl diphospho-[N-acetyl-alpha-D-glucosaminyl-(1-&gt;4)]-N-acetyl-alpha-D-muramoyl-L-alanyl-D-glutamyl-meso-2,6-diaminopimeloyl-D-alanyl-D-alanine + UDP + H(+). Its pathway is cell wall biogenesis; peptidoglycan biosynthesis. Functionally, cell wall formation. Catalyzes the transfer of a GlcNAc subunit on undecaprenyl-pyrophosphoryl-MurNAc-pentapeptide (lipid intermediate I) to form undecaprenyl-pyrophosphoryl-MurNAc-(pentapeptide)GlcNAc (lipid intermediate II). The chain is UDP-N-acetylglucosamine--N-acetylmuramyl-(pentapeptide) pyrophosphoryl-undecaprenol N-acetylglucosamine transferase from Bartonella henselae (strain ATCC 49882 / DSM 28221 / CCUG 30454 / Houston 1) (Rochalimaea henselae).